Here is a 105-residue protein sequence, read N- to C-terminus: Ferredoxin (105 aa).

Cys8 and Cys16 together coordinate [3Fe-4S] cluster. [4Fe-4S] cluster is bound by residues Cys20, Cys39, Cys42, and Cys45. Residues 30–59 enclose the 4Fe-4S ferredoxin-type domain; sequence RSLYIHPDECVDCGACEPVCPVEAIFYEDD. Position 49 (Cys49) interacts with [3Fe-4S] cluster.

It depends on [4Fe-4S] cluster as a cofactor. The cofactor is [3Fe-4S] cluster.

Ferredoxins are iron-sulfur proteins that transfer electrons in a wide variety of metabolic reactions. Its function is as follows. Putative electron transport protein for the cytochrome P-450SOY system from the same organism. The chain is Ferredoxin from Streptomyces griseus.